The following is a 979-amino-acid chain: UPF0182 protein MT0070 (979 aa).

Helical transmembrane passes span 19 to 41, 63 to 85, 114 to 136, 174 to 196, 208 to 230, 261 to 280, and 285 to 307; these read LVTA…DIYV, LAIV…LLAY, LFGW…FDWV, WLFV…FGGL, AARV…AYWL, LVLV…AIFL, and IPAM…WPLL. The tract at residues 894–948 is disordered; the sequence is VFGPGTGRVATXPGGDAASAPPPGAGGPAPPQGVPPPRTTQPPAAPPRGPDVPPA. Residues 913–946 are compositionally biased toward pro residues; it reads APPPGAGGPAPPQGVPPPRTTQPPAAPPRGPDVP.

Belongs to the UPF0182 family.

The protein resides in the cell membrane. The polypeptide is UPF0182 protein MT0070 (Mycobacterium tuberculosis (strain CDC 1551 / Oshkosh)).